Here is a 722-residue protein sequence, read N- to C-terminus: Polyribonucleotide nucleotidyltransferase (722 aa).

Mg(2+)-binding residues include aspartate 487 and aspartate 493. One can recognise a KH domain in the interval proline 554–isoleucine 613. Residues glycine 623 to lysine 691 enclose the S1 motif domain. Positions threonine 697–glutamate 722 are disordered. Over residues leucine 701–glycine 713 the composition is skewed to basic and acidic residues.

It belongs to the polyribonucleotide nucleotidyltransferase family. Mg(2+) serves as cofactor.

It is found in the cytoplasm. It catalyses the reaction RNA(n+1) + phosphate = RNA(n) + a ribonucleoside 5'-diphosphate. Its function is as follows. Involved in mRNA degradation. Catalyzes the phosphorolysis of single-stranded polyribonucleotides processively in the 3'- to 5'-direction. The protein is Polyribonucleotide nucleotidyltransferase of Rhodopseudomonas palustris (strain TIE-1).